An 89-amino-acid chain; its full sequence is DNA/RNA-binding protein Alba 2 (89 aa).

The protein belongs to the histone-like Alba family. Forms homodimers and homotetramers. Interacts with Alba 1.

The protein resides in the cytoplasm. It is found in the chromosome. Its function is as follows. Binds double-stranded DNA tightly but without sequence specificity. Involved in DNA compaction. The protein is DNA/RNA-binding protein Alba 2 of Archaeoglobus fulgidus (strain ATCC 49558 / DSM 4304 / JCM 9628 / NBRC 100126 / VC-16).